Consider the following 682-residue polypeptide: Methionine--tRNA ligase (682 aa).

Positions 14–24 (PYANGSIHLGH) match the 'HIGH' region motif. C145, C148, C158, and C161 together coordinate Zn(2+). The 'KMSKS' region motif lies at 331 to 335 (KMSKS). K334 lines the ATP pocket. The 103-residue stretch at 580-682 (AFAAIDLRVA…SGARPGQRIK (103 aa)) folds into the tRNA-binding domain.

Belongs to the class-I aminoacyl-tRNA synthetase family. MetG type 1 subfamily. In terms of assembly, homodimer. The cofactor is Zn(2+).

The protein resides in the cytoplasm. The catalysed reaction is tRNA(Met) + L-methionine + ATP = L-methionyl-tRNA(Met) + AMP + diphosphate. In terms of biological role, is required not only for elongation of protein synthesis but also for the initiation of all mRNA translation through initiator tRNA(fMet) aminoacylation. The polypeptide is Methionine--tRNA ligase (Pseudomonas syringae pv. syringae (strain B728a)).